We begin with the raw amino-acid sequence, 118 residues long: Waprin-Enh1 (118 aa).

An N-terminal signal peptide occupies residues 1–24 (MKTLTGLLLVGLLALWIGLPSTSS). WAP domains are found at residues 25-72 (KILF…RSCR) and 74-118 (PPVL…RICK). Cystine bridges form between C30/C63, C40/C67, C50/C62, C56/C71, C81/C109, C88/C113, C96/C108, and C102/C117.

It belongs to the venom waprin family. In terms of tissue distribution, expressed by the venom gland.

It is found in the secreted. Functionally, damages membranes of susceptible bacteria. Has no hemolytic activity. Not toxic to mice. Does not inhibit the proteinases elastase and cathepsin G. In Pseudoferania polylepis (Macleay's water snake), this protein is Waprin-Enh1.